The primary structure comprises 486 residues: Ribulose bisphosphate carboxylase large chain (486 aa).

Residues 1 to 2 (MS) constitute a propeptide that is removed on maturation. Substrate-binding residues include N123 and T173. The Proton acceptor role is filled by K175. Substrate is bound at residue K177. Mg(2+) contacts are provided by K201, D203, and E204. K201 bears the N6-carboxylysine mark. S208 is subject to Phosphoserine. The active-site Proton acceptor is the H294. Substrate-binding residues include R295 and H327. At T330 the chain carries Phosphothreonine. Substrate is bound at residue S379.

The protein belongs to the RuBisCO large chain family. Type I subfamily. As to quaternary structure, heterohexadecamer of 8 large chains and 8 small chains; disulfide-linked. The disulfide link is formed within the large subunit homodimers. Requires Mg(2+) as cofactor. In terms of processing, the disulfide bond which can form in the large chain dimeric partners within the hexadecamer appears to be associated with oxidative stress and protein turnover.

Its subcellular location is the plastid. It is found in the chloroplast. The catalysed reaction is 2 (2R)-3-phosphoglycerate + 2 H(+) = D-ribulose 1,5-bisphosphate + CO2 + H2O. It carries out the reaction D-ribulose 1,5-bisphosphate + O2 = 2-phosphoglycolate + (2R)-3-phosphoglycerate + 2 H(+). Functionally, ruBisCO catalyzes two reactions: the carboxylation of D-ribulose 1,5-bisphosphate, the primary event in carbon dioxide fixation, as well as the oxidative fragmentation of the pentose substrate in the photorespiration process. Both reactions occur simultaneously and in competition at the same active site. The sequence is that of Ribulose bisphosphate carboxylase large chain from Aethionema grandiflorum (Persian stone-cress).